A 520-amino-acid polypeptide reads, in one-letter code: Basal body-orientation factor 1 (520 aa).

Basic residues predominate over residues 1–21; the sequence is MPKKKGKGKGKGKGKGKGKKD. The disordered stretch occupies residues 1-34; that stretch reads MPKKKGKGKGKGKGKGKGKKDGKHDSKADRESEI. Basic and acidic residues predominate over residues 22 to 34; the sequence is GKHDSKADRESEI. 2 coiled-coil regions span residues 27-175 and 245-386; these read KADR…REKM and VKEA…RQEA. The disordered stretch occupies residues 468-492; it reads AHPPALSASSSEKIQVSSDAGSTVE. Residues 469 to 478 are compositionally biased toward low complexity; it reads HPPALSASSS. The span at 479-492 shows a compositional bias: polar residues; that stretch reads EKIQVSSDAGSTVE.

Belongs to the BBOF1 family.

The protein localises to the cytoplasm. It is found in the cytoskeleton. It localises to the cilium basal body. In terms of biological role, basal body protein required in multiciliate cells to align and maintain cilia orientation in response to flow. May act by mediating a maturation step that stabilizes and aligns cilia orientation. Not required to respond to planar cell polarity (PCP) or flow-based orientation cues. This chain is Basal body-orientation factor 1, found in Danio rerio (Zebrafish).